A 131-amino-acid chain; its full sequence is Small ribosomal subunit protein uS8 (131 aa).

This sequence belongs to the universal ribosomal protein uS8 family. Part of the 30S ribosomal subunit. Contacts proteins S5 and S12.

One of the primary rRNA binding proteins, it binds directly to 16S rRNA central domain where it helps coordinate assembly of the platform of the 30S subunit. In Chlorobium limicola (strain DSM 245 / NBRC 103803 / 6330), this protein is Small ribosomal subunit protein uS8.